A 239-amino-acid polypeptide reads, in one-letter code: Ribose-5-phosphate isomerase A (239 aa).

Residues 39–42, 95–98, and 108–111 contribute to the substrate site; these read SGST, DGAD, and KGGG. The Proton acceptor role is filled by Glu-117. Substrate is bound at residue Lys-135.

It belongs to the ribose 5-phosphate isomerase family. Homodimer.

It carries out the reaction aldehydo-D-ribose 5-phosphate = D-ribulose 5-phosphate. It functions in the pathway carbohydrate degradation; pentose phosphate pathway; D-ribose 5-phosphate from D-ribulose 5-phosphate (non-oxidative stage): step 1/1. In terms of biological role, catalyzes the reversible conversion of ribose-5-phosphate to ribulose 5-phosphate. The sequence is that of Ribose-5-phosphate isomerase A from Chlamydia muridarum (strain MoPn / Nigg).